The following is a 212-amino-acid chain: ATP phosphoribosyltransferase (212 aa).

The protein belongs to the ATP phosphoribosyltransferase family. Short subfamily. In terms of assembly, heteromultimer composed of HisG and HisZ subunits.

It is found in the cytoplasm. The enzyme catalyses 1-(5-phospho-beta-D-ribosyl)-ATP + diphosphate = 5-phospho-alpha-D-ribose 1-diphosphate + ATP. It participates in amino-acid biosynthesis; L-histidine biosynthesis; L-histidine from 5-phospho-alpha-D-ribose 1-diphosphate: step 1/9. Catalyzes the condensation of ATP and 5-phosphoribose 1-diphosphate to form N'-(5'-phosphoribosyl)-ATP (PR-ATP). Has a crucial role in the pathway because the rate of histidine biosynthesis seems to be controlled primarily by regulation of HisG enzymatic activity. The protein is ATP phosphoribosyltransferase (hisG) of Halalkalibacterium halodurans (strain ATCC BAA-125 / DSM 18197 / FERM 7344 / JCM 9153 / C-125) (Bacillus halodurans).